The sequence spans 152 residues: D-aminoacyl-tRNA deacylase (152 aa).

Residues 142–143 carry the Gly-cisPro motif, important for rejection of L-amino acids motif; the sequence is GP.

It belongs to the DTD family. In terms of assembly, homodimer.

The protein localises to the cytoplasm. It carries out the reaction glycyl-tRNA(Ala) + H2O = tRNA(Ala) + glycine + H(+). The catalysed reaction is a D-aminoacyl-tRNA + H2O = a tRNA + a D-alpha-amino acid + H(+). In terms of biological role, an aminoacyl-tRNA editing enzyme that deacylates mischarged D-aminoacyl-tRNAs. Also deacylates mischarged glycyl-tRNA(Ala), protecting cells against glycine mischarging by AlaRS. Acts via tRNA-based rather than protein-based catalysis; rejects L-amino acids rather than detecting D-amino acids in the active site. By recycling D-aminoacyl-tRNA to D-amino acids and free tRNA molecules, this enzyme counteracts the toxicity associated with the formation of D-aminoacyl-tRNA entities in vivo and helps enforce protein L-homochirality. This chain is D-aminoacyl-tRNA deacylase, found in Paraburkholderia phymatum (strain DSM 17167 / CIP 108236 / LMG 21445 / STM815) (Burkholderia phymatum).